Consider the following 1586-residue polypeptide: Zinc finger protein GLI2 (1586 aa).

Positions 1–10 (METSASATAS) are enriched in polar residues. The disordered stretch occupies residues 1-22 (METSASATASEKQEAKSGILEA). Val50 is covalently cross-linked (Glycyl lysine isopeptide (Lys-Gly) (interchain with G-Cter in SUMO2)). Residues Ser149, Ser234, Ser236, and Ser242 each carry the phosphoserine modification. Over residues 342–367 (SSSSNCLSDTNQNKQSSESAVSSTVN) the composition is skewed to polar residues. The interval 342–389 (SSSSNCLSDTNQNKQSSESAVSSTVNPVAIHKRSKVKTEPEGLRPASP) is disordered. Ser388 carries the phosphoserine; by DYRK2 modification. A C2H2-type 1 zinc finger spans residues 437–464 (TNCHWEDCTKEYDTQEQLVHHINNEHIH). A C2H2-type 2; degenerate zinc finger spans residues 475-497 (QACTREQKPFKAQYMLVVHMRRH). 3 C2H2-type zinc fingers span residues 503–527 (HKCT…LRSH), 533–558 (YVCE…NRTH), and 564–589 (YICK…KTVH). Disordered stretches follow at residues 577–636 (DPSS…TSQA) and 650–716 (SSGL…SAGG). Residues 589-605 (HGPDAHVTKKQRNDVHL) show a composition bias toward basic and acidic residues. The span at 654 to 674 (CQSSPGAQSSCSSEPSPLGSA) shows a compositional bias: low complexity. Thr725 is modified (phosphothreonine). Disordered stretches follow at residues 742-879 (DSCS…SGLL), 925-1030 (RTLP…RPPS), 1182-1215 (QYPG…PSQG), 1421-1441 (MGNM…GAPD), and 1469-1498 (MRSQ…QVSS). An N6-acetyllysine; by EP300 modification is found at Lys757. The span at 791 to 802 (LSASEVTMLSQL) shows a compositional bias: polar residues. Composition is skewed to low complexity over residues 809-824 (STST…RRSS) and 947-961 (GHGH…PHEA). Over residues 968-977 (RASDPVRRPD) the composition is skewed to basic and acidic residues. Position 1011 is a phosphoserine; by DYRK2 (Ser1011). Over residues 1469–1485 (MRSQPPQPQACQDSIQP) the composition is skewed to polar residues.

Belongs to the GLI C2H2-type zinc-finger protein family. As to quaternary structure, interaction with ZIC1 and ZIC2. Interacts with STK36. Interacts with SUFU; this inhibits transcriptional activation mediated by GLI2. Interacts (via C-terminal internal region) with FOXC1 (via N-terminus); this interaction is direct and increases GLI2 DNA-binding and transcriptional activity through a smoothened (SMO)-independent Hedgehog (Hh) signaling pathway. Post-translationally, phosphorylated in vitro by ULK3. Phosphorylated by DYRK2; this inhibits GLI2 transcription factor activity and promotes proteasomal degradation of GLI2. Acetylation at Lys-757 inhibits Hh target gene expression, probably by impeding entry into chromatin thus preventing promoter occupancy. In terms of tissue distribution, expressed in breast cancers (at protein level). Isoform 1 and isoform 4 are expressed in HTLV-1-infected T-cell lines (at protein level). Isoform 1 and isoform 2 are strongly expressed in HTLV-1-infected T-cell lines. Isoform 3 and isoform 4 are weakly expressed in HTLV-1-infected T-cell lines.

It localises to the nucleus. The protein localises to the cytoplasm. It is found in the cell projection. The protein resides in the cilium. In terms of biological role, functions as a transcription regulator in the hedgehog (Hh) pathway. Functions as a transcriptional activator. May also function as transcriptional repressor. Requires STK36 for full transcriptional activator activity. Required for normal embryonic development. Functionally, involved in the smoothened (SHH) signaling pathway. Its function is as follows. Acts as a transcriptional activator in T-cell leukemia virus type 1 (HTLV-1)-infected cells in a Tax-dependent manner. Binds to the DNA sequence 5'-GAACCACCCA-3' which is part of the Tax-responsive element (TRE-2S) regulatory element that augments the Tax-dependent enhancer of HTLV-1. (Microbial infection) Acts as a transcriptional activators in T-cell leukemia virus type 1 (HTLV-1)-infected cells in a Tax-dependent manner. Binds to the DNA sequence 5'-GAACCACCCA-3' which is part of the Tax-responsive element (TRE-2S) regulatory element that augments the Tax-dependent enhancer of HTLV-1. In terms of biological role, acts as a transcriptional repressor. This Homo sapiens (Human) protein is Zinc finger protein GLI2.